The chain runs to 399 residues: Subtilisin-like protease 4 (399 aa).

A signal peptide spans 1-19; the sequence is MVCLKTLSVFLAAFAVADA. The propeptide occupies 20 to 118; that stretch reads RAVFKTQSNK…VEQDQVVRIS (99 aa). The Inhibitor I9 domain maps to 38-117; sequence YIVVMKDGVS…YVEQDQVVRI (80 aa). The region spanning 128-399 is the Peptidase S8 domain; it reads SWGLGRVSHR…NRLLYNGSGQ (272 aa). Residues Asp-160 and His-191 each act as charge relay system in the active site. Residue Asn-252 is glycosylated (N-linked (GlcNAc...) asparagine). Residue Ser-346 is the Charge relay system of the active site. Polar residues predominate over residues 380–392; the sequence is AISNPGSGTTNRL. Residues 380–399 form a disordered region; sequence AISNPGSGTTNRLLYNGSGQ. Residue Asn-395 is glycosylated (N-linked (GlcNAc...) asparagine).

This sequence belongs to the peptidase S8 family.

The protein localises to the secreted. Functionally, secreted subtilisin-like serine protease with keratinolytic activity that contributes to pathogenicity. The protein is Subtilisin-like protease 4 (SUB4) of Arthroderma gypseum (strain ATCC MYA-4604 / CBS 118893) (Microsporum gypseum).